The following is a 488-amino-acid chain: DNA polymerase II small subunit (488 aa).

Belongs to the DNA polymerase delta/II small subunit family. In terms of assembly, heterodimer of a large subunit and a small subunit.

It carries out the reaction DNA(n) + a 2'-deoxyribonucleoside 5'-triphosphate = DNA(n+1) + diphosphate. It catalyses the reaction Exonucleolytic cleavage in the 3'- to 5'-direction to yield nucleoside 5'-phosphates.. Possesses two activities: a DNA synthesis (polymerase) and an exonucleolytic activity that degrades single-stranded DNA in the 3' to 5' direction. Has a template-primer preference which is characteristic of a replicative DNA polymerase. The protein is DNA polymerase II small subunit (polB) of Archaeoglobus fulgidus (strain ATCC 49558 / DSM 4304 / JCM 9628 / NBRC 100126 / VC-16).